Consider the following 257-residue polypeptide: Capsid protein (257 aa).

The short motif at 3 to 20 (KRTGDILISTPVSKVRRK) is the Bipartite nuclear localization signal element. Positions 40-54 (KRRSWTYRPMYRKPR) match the Nuclear localization signal motif. The segment at 68-85 (CEGPCKVQSYEQRDDVKH) is a zinc-finger region. Residues 101–122 (ITHRVGKRFCIKSIYILGKIWM) carry the Nuclear export signal motif. A Bipartite nuclear localization signal motif is present at residues 201–248 (KRFFKVNTHVVYNHQEQAKYENHTENALLLYMACTHASNPVYATLKIR).

The protein belongs to the geminiviridae capsid protein family. As to quaternary structure, homomultimer. Binds to single-stranded and double-stranded viral DNA. Interacts (via nuclear localization signals) with host importin alpha-1a.

It localises to the virion. Its subcellular location is the host nucleus. In terms of biological role, encapsidates the viral genome into characteristic twinned ('geminate') particles. Binds the genomic viral ssDNA and shuttles it into and out of the cell nucleus. Plays a role in protection of the genome from degradation, virus acquisition and transmission by insect vectors, infectivity, and systemic movement. The CP of monopartite geminiviruses is absolutely essential for virus movement. The sequence is that of Capsid protein from Tomato yellow leaf curl Sardinia virus (isolate Spain-1) (TYLCSV).